The chain runs to 388 residues: Autophagy-related protein 21 (388 aa).

WD repeat units lie at residues C179–E219 and S224–S263. The L/FRRG motif signature appears at F220–S224.

The protein belongs to the WD repeat PROPPIN family.

The protein localises to the cytoplasm. It localises to the membrane. Its subcellular location is the vacuole membrane. In terms of biological role, involved in peroxisome sequestration to the vacuole during macropexophagy. Also required for microautophagy. The protein is Autophagy-related protein 21 (ATG21) of Pichia angusta (Yeast).